Consider the following 59-residue polypeptide: Large ribosomal subunit protein uL30 (59 aa).

The protein belongs to the universal ribosomal protein uL30 family. As to quaternary structure, part of the 50S ribosomal subunit.

This chain is Large ribosomal subunit protein uL30, found in Leptospira biflexa serovar Patoc (strain Patoc 1 / ATCC 23582 / Paris).